Consider the following 57-residue polypeptide: UPF0337 protein SAV_1088 (57 aa).

Composition is skewed to basic and acidic residues over residues 1 to 15 (MAGD…EQAK) and 36 to 57 (QAEK…VFKH). The segment at 1-57 (MAGDQKAKAKMEQAKGKAKAAAGRAVGNERMAAEGQAEKSKGDARQAKEKTKDVFKH) is disordered.

This sequence belongs to the UPF0337 (CsbD) family.

The sequence is that of UPF0337 protein SAV_1088 from Streptomyces avermitilis (strain ATCC 31267 / DSM 46492 / JCM 5070 / NBRC 14893 / NCIMB 12804 / NRRL 8165 / MA-4680).